Here is a 467-residue protein sequence, read N- to C-terminus: Chromosomal replication initiator protein DnaA (467 aa).

The segment at 1-84 (MDISLDQLWD…LQVEFSVSPH (84 aa)) is domain I, interacts with DnaA modulators. The segment at 84-125 (HASVEAEPPSRAISPTSGRAGSLPASTTLGLEVGGSLPMRAP) is domain II. Residues 89–108 (AEPPSRAISPTSGRAGSLPA) are disordered. The segment covering 96–108 (ISPTSGRAGSLPA) has biased composition (polar residues). The tract at residues 126 to 342 (DLNPKYSFSR…GALIRAVAYV (217 aa)) is domain III, AAA+ region. The ATP site is built by G170, G172, K173, and T174. The interval 343–467 (SISGLPMSVE…LRVVANSRSS (125 aa)) is domain IV, binds dsDNA.

This sequence belongs to the DnaA family. Oligomerizes as a right-handed, spiral filament on DNA at oriC.

It localises to the cytoplasm. Its function is as follows. Plays an essential role in the initiation and regulation of chromosomal replication. ATP-DnaA binds to the origin of replication (oriC) to initiate formation of the DNA replication initiation complex once per cell cycle. Binds the DnaA box (a 9 base pair repeat at the origin) and separates the double-stranded (ds)DNA. Forms a right-handed helical filament on oriC DNA; dsDNA binds to the exterior of the filament while single-stranded (ss)DNA is stabiized in the filament's interior. The ATP-DnaA-oriC complex binds and stabilizes one strand of the AT-rich DNA unwinding element (DUE), permitting loading of DNA polymerase. After initiation quickly degrades to an ADP-DnaA complex that is not apt for DNA replication. Binds acidic phospholipids. The chain is Chromosomal replication initiator protein DnaA from Synechococcus sp. (strain JA-2-3B'a(2-13)) (Cyanobacteria bacterium Yellowstone B-Prime).